A 722-amino-acid chain; its full sequence is Ribosomal RNA large subunit methyltransferase K/L (722 aa).

In terms of domain architecture, THUMP spans 43–154 (IGLRACLWSR…GNEGRVGIDL (112 aa)).

Belongs to the methyltransferase superfamily. RlmKL family.

Its subcellular location is the cytoplasm. The catalysed reaction is guanosine(2445) in 23S rRNA + S-adenosyl-L-methionine = N(2)-methylguanosine(2445) in 23S rRNA + S-adenosyl-L-homocysteine + H(+). The enzyme catalyses guanosine(2069) in 23S rRNA + S-adenosyl-L-methionine = N(2)-methylguanosine(2069) in 23S rRNA + S-adenosyl-L-homocysteine + H(+). Functionally, specifically methylates the guanine in position 2445 (m2G2445) and the guanine in position 2069 (m7G2069) of 23S rRNA. This is Ribosomal RNA large subunit methyltransferase K/L from Magnetococcus marinus (strain ATCC BAA-1437 / JCM 17883 / MC-1).